A 483-amino-acid polypeptide reads, in one-letter code: Altronate oxidoreductase (483 aa).

Position 18 to 29 (18 to 29 (IIQFGEGNFLRA)) interacts with NAD(+).

The protein belongs to the mannitol dehydrogenase family. UxaB subfamily.

It carries out the reaction D-altronate + NAD(+) = keto-D-tagaturonate + NADH + H(+). The protein operates within carbohydrate metabolism; pentose and glucuronate interconversion. The protein is Altronate oxidoreductase of Escherichia coli O7:K1 (strain IAI39 / ExPEC).